The sequence spans 509 residues: Heat shock 70 kDa protein 14 (509 aa).

The protein belongs to the heat shock protein 70 family. In terms of assembly, component of ribosome-associated complex (RAC), a heterodimer composed of Hsp70/DnaK-type chaperone HSPA14 and Hsp40/DnaJ-type chaperone DNAJC2.

Its subcellular location is the cytoplasm. The protein resides in the cytosol. Component of the ribosome-associated complex (RAC), a complex involved in folding or maintaining nascent polypeptides in a folding-competent state. In the RAC complex, binds to the nascent polypeptide chain, while DNAJC2 stimulates its ATPase activity. The polypeptide is Heat shock 70 kDa protein 14 (HSPA14) (Macaca fascicularis (Crab-eating macaque)).